Reading from the N-terminus, the 520-residue chain is Lysine--tRNA ligase (520 aa).

Positions 1 to 21 (MSDHLIPSIPTPAAAPAAAPA) are disordered. Over residues 12 to 21 (PAAAPAAAPA) the composition is skewed to low complexity. Residues E430 and E437 each coordinate Mg(2+).

This sequence belongs to the class-II aminoacyl-tRNA synthetase family. Homodimer. Requires Mg(2+) as cofactor.

The protein resides in the cytoplasm. It catalyses the reaction tRNA(Lys) + L-lysine + ATP = L-lysyl-tRNA(Lys) + AMP + diphosphate. This Variovorax paradoxus (strain S110) protein is Lysine--tRNA ligase.